The chain runs to 48 residues: Protein YgdT (48 aa).

The protein is Protein YgdT (ygdT) of Escherichia coli (strain K12).